We begin with the raw amino-acid sequence, 386 residues long: Hydrazine synthase subunit beta (386 aa).

A signal peptide spans 1 to 34 (MVIRRKMNKMIRKGMIGAVMLGAAVAISGGVATA).

As to quaternary structure, part of the hydrazine synthase complex that forms an elongated dimer of heterotrimers composed of one alpha, one beta and one gamma subunit.

The protein localises to the anammoxosome. Its pathway is nitrogen metabolism. Component of the hydrazine synthase complex that catalyzes the condensation of nitric oxide (NO) with ammonium to form hydrazine. The beta subunit may play a role in modulating transport of the hydroxylamine intermediate through a tunnel between the gamma and alpha subunit's active site. Is involved in anaerobic ammonium oxidation (anammox), a biological process in which nitrite is used as the electron acceptor in the conversion of ammonium to dinitrogen gas (N2) and water; this bacterial process has a major role in the Earth's nitrogen cycle and has been estimated to synthesize up to 50% of the dinitrogen gas emitted into our atmosphere from the oceans. This chain is Hydrazine synthase subunit beta, found in Kuenenia stuttgartiensis.